The chain runs to 261 residues: Neurovirulence factor ICP34.5 (261 aa).

Residues 1 to 17 show a composition bias toward basic residues; sequence MSRRRGPRRRGPRRRPR. A required for nucleolar localization region spans residues 1–19; sequence MSRRRGPRRRGPRRRPRPG. Disordered stretches follow at residues 1–59, 75–135, and 145–164; these read MSRR…SAPA, DSDD…LALR, and RLSL…APRG. Repeats lie at residues 3–7, 8–12, 16–23, and 24–31; these read RRRGP and PRPGAPAV. A 2 X 5 AA tandem repeats of R-R-R-G-P region spans residues 3–12; that stretch reads RRRGPRRRGP. A 2 X 8 AA tandem repeats of P-R-P-G-A-P-A-V region spans residues 16-31; the sequence is PRPGAPAVPRPGAPAV. A compositionally biased stretch (pro residues) spans 18 to 32; sequence PGAPAVPRPGAPAVP. Over residues 75–88 the composition is skewed to acidic residues; sequence DSDDADYAGNDDAE. The segment covering 101–111 has biased composition (low complexity); the sequence is APEAPHAAPAA. The Nuclear export signal signature appears at 128 to 137; sequence LPPHLALRLR. The tract at residues 163–176 is binding to PP1CA; it reads RGKVCFSPRVQVRH. The segment at 163-176 is interaction with host PPP1CA; it reads RGKVCFSPRVQVRH. The segment at 178-261 is important for interferon resistance; it reads VAWETAARLA…AAAGPGRRAV (84 aa). A Bipartite nuclear localization signal motif is present at residues 188–206; the sequence is RRGSWARERADRDRFRRRV. The interaction with host EIF2S1/EIF-2ALPHA stretch occupies residues 206 to 221; sequence VAAAEAVIGPCLEPEA. Residues 223-261 form a disordered region; that stretch reads ARARARARAHEDGGPAEEEEAAAAARGSSAAAGPGRRAV. Positions 244–261 are enriched in low complexity; that stretch reads AAAARGSSAAAGPGRRAV.

This sequence belongs to the PPP1R15 family. In terms of assembly, interacts with host PPP1CA to form a high-molecular-weight complex that dephosphorylates EIF2S1/eIF-2alpha. Interacts with host EIF2S1/eIF-2alpha; this interaction is crucial for the specific dephosphorylation of EIF2S1/eIF-2alpha by PPP1CA.

Its subcellular location is the host cytoplasm. The protein resides in the host nucleus. It localises to the host nucleolus. The protein localises to the virion. In terms of biological role, plays essential roles in viral nuclear egress to mediate capsid transit across the nuclear membrane and also in the inhibition of host immune response and integrated stress response (ISR). Facilitates nuclear egress cooperatively with host C1QBP and protein kinase C/PKC to induce lamin A/C phosphorylation and subsequent reorganization. In turn, lamina disassembles and nuclear egress occurs. Recruits the serine/threonine-protein phosphatase PPP1CA/PP1-alpha to dephosphorylate the translation initiation factor EIF2S1/eIF-2alpha, thereby couteracting the host shutoff of protein synthesis involving double-stranded RNA-dependent protein kinase EIF2AK2/PKR. Also down-modulates the host MHC class II proteins cell surface expression. Acts as a neurovirulence factor that has a profound effect on the growth of the virus in central nervous system tissue, probably through its ability to maintain an environment favorable for viral replication. The sequence is that of Neurovirulence factor ICP34.5 (RL1) from Human herpesvirus 2 (strain HG52) (HHV-2).